Consider the following 355-residue polypeptide: C-C chemokine receptor type 1 (355 aa).

Residues 1–34 (MEISDFTEAYPTTTEFDYGDSTPCQKTAVRAFGA) lie on the Extracellular side of the membrane. Residues 35 to 60 (GLLPPLYSLVFIIGVVGNVLVILVLM) traverse the membrane as a helical segment. The Cytoplasmic segment spans residues 61–64 (QHRR). Residues 65–91 (LQSMTSIYLFNLAVSDLVFLFTLPFWI) traverse the membrane as a helical segment. Over 92–107 (DYKLKDDWIFGDAMCK) the chain is Extracellular. C106 and C183 form a disulfide bridge. Residues 108 to 129 (LLSGFYYLGLYSEIFFIILLTI) traverse the membrane as a helical segment. The Cytoplasmic portion of the chain corresponds to 130–146 (DRYLAIVHAVFALRART). Residues 147–171 (VTFGIITSIITWALAILASMPALYF) traverse the membrane as a helical segment. At 172–197 (FKAQWEFTHRTCSPHFPYKSLKQWKR) the chain is on the extracellular side. Residues 198–223 (FQALKLNLLGLILPLLVMIICYAGII) traverse the membrane as a helical segment. Residues 224–239 (RILLRRPSEKKVKAVR) are Cytoplasmic-facing. The helical transmembrane segment at 240-264 (LIFAITLLFFLLWTPYNLSVFVSAF) threads the bilayer. Residues 265 to 281 (QDVLFTNQCEQSKQLDL) are Extracellular-facing. The chain crosses the membrane as a helical span at residues 282 to 305 (AMQVTEVIAYTHCCVNPIIYVFVG). At 306-355 (ERFWKYLRQLFQRHVAIPLAKWLPFLSVDQLERTSSISPSTGEHELSAGF) the chain is on the cytoplasmic side.

It belongs to the G-protein coupled receptor 1 family. In terms of assembly, interacts with CREB3. Interacts with CCL3. Interacts with CCL15. Interacts with CCL23. Interacts with GNAI1. Interacts with PF4/CXCL4. As to expression, detected in the heart, spleen, lung, peritoneal exudate cells and leukocytes.

It localises to the cell membrane. Its function is as follows. Chemokine receptor that plays a crucial role in regulating immune cell migration, inflammation, and immune responses. Contributes to the inflammatory response by recruiting immune cells, such as monocytes, macrophages, T-cells, and dendritic cells, to sites of inflammation for the clearance of pathogens and the resolution of tissue damage. When activated by its ligands including CCL3, CCL5-9, CCL13-16 and CCL23, triggers a signaling cascade within immune cells, leading to their migration towards the source of the chemokine. For example, mediates neutrophil migration after activation by CCL3 leading to the sequential release of TNF-alpha and leukotriene B4. Also mediates monocyte migration upon CXCL4 binding. Activation by CCL5 results in neuroinflammation through the ERK1/2 signaling pathway. The sequence is that of C-C chemokine receptor type 1 (Ccr1) from Mus musculus (Mouse).